The sequence spans 287 residues: Kit ligand (287 aa).

Positions 1-25 (MKKAQTWIITCFCLQLLLLNPLVKT) are cleaved as a signal peptide. Residues 26 to 225 (QSSCGNPVTD…LGFISSSSLQ (200 aa)) are Extracellular-facing. Intrachain disulfides connect Cys-29-Cys-117 and Cys-68-Cys-167. 6 N-linked (GlcNAc...) asparagine glycosylation sites follow: Asn-100, Asn-106, Asn-149, Asn-178, Asn-200, and Asn-206. A helical membrane pass occupies residues 226-246 (GISIALTSLLSLLIGFILGVI). The Cytoplasmic segment spans residues 247-287 (YWKKTHPKSRPESNETTQCHGCQEENEISMLQQKEKEHLQV).

Belongs to the SCF family. Homodimer, non-covalently linked. In terms of processing, a soluble form is produced by proteolytic processing of isoform 1 in the extracellular domain.

The protein resides in the cell membrane. Its subcellular location is the secreted. It is found in the cytoplasm. It localises to the cytoskeleton. The protein localises to the cell projection. The protein resides in the lamellipodium. Its subcellular location is the filopodium. Ligand for the receptor-type protein-tyrosine kinase KIT. Plays an essential role in the regulation of cell survival and proliferation, hematopoiesis, stem cell maintenance, gametogenesis, mast cell development, migration and function, and in melanogenesis. KITLG/SCF binding can activate several signaling pathways. Acts synergistically with other cytokines, probably interleukins. The sequence is that of Kit ligand (KITLG) from Coturnix japonica (Japanese quail).